The following is a 1065-amino-acid chain: Carbamoyl phosphate synthase large chain (1065 aa).

The segment at 1–401 (MPLDKTIKKV…ALLKAVTSLE (401 aa)) is carboxyphosphate synthetic domain. ATP-binding residues include Arg129, Arg169, Gly175, Gly176, Gln208, Val210, Glu215, Gly241, Val242, His243, Gln284, and Glu298. Residues 133–327 (KNLMEEIDEP…IAKIAAKIAV (195 aa)) form the ATP-grasp 1 domain. Positions 284, 298, and 300 each coordinate Mg(2+). Mn(2+) is bound by residues Gln284, Glu298, and Asn300. The segment at 402-548 (GKISGLRLEK…YSSYENEDEN (147 aa)) is oligomerization domain. Residues 549–931 (EVTDDKKIVV…AIYKGFRAAG (383 aa)) are carbamoyl phosphate synthetic domain. Residues 673-863 (SELLKELNIP…MVKLAVEILT (191 aa)) enclose the ATP-grasp 2 domain. Positions 709, 748, 750, 754, 779, 780, 781, 782, 822, and 834 each coordinate ATP. Residues Gln822, Glu834, and Asn836 each coordinate Mg(2+). Mn(2+)-binding residues include Gln822, Glu834, and Asn836. In terms of domain architecture, MGS-like spans 932–1065 (IEVPKDGGNL…EYRAMKEYFK (134 aa)). An allosteric domain region spans residues 932–1065 (IEVPKDGGNL…EYRAMKEYFK (134 aa)).

It belongs to the CarB family. In terms of assembly, composed of two chains; the small (or glutamine) chain promotes the hydrolysis of glutamine to ammonia, which is used by the large (or ammonia) chain to synthesize carbamoyl phosphate. Tetramer of heterodimers (alpha,beta)4. It depends on Mg(2+) as a cofactor. Mn(2+) serves as cofactor.

The enzyme catalyses hydrogencarbonate + L-glutamine + 2 ATP + H2O = carbamoyl phosphate + L-glutamate + 2 ADP + phosphate + 2 H(+). It catalyses the reaction hydrogencarbonate + NH4(+) + 2 ATP = carbamoyl phosphate + 2 ADP + phosphate + 2 H(+). The protein operates within amino-acid biosynthesis; L-arginine biosynthesis; carbamoyl phosphate from bicarbonate: step 1/1. Its pathway is pyrimidine metabolism; UMP biosynthesis via de novo pathway; (S)-dihydroorotate from bicarbonate: step 1/3. Functionally, large subunit of the glutamine-dependent carbamoyl phosphate synthetase (CPSase). CPSase catalyzes the formation of carbamoyl phosphate from the ammonia moiety of glutamine, carbonate, and phosphate donated by ATP, constituting the first step of 2 biosynthetic pathways, one leading to arginine and/or urea and the other to pyrimidine nucleotides. The large subunit (synthetase) binds the substrates ammonia (free or transferred from glutamine from the small subunit), hydrogencarbonate and ATP and carries out an ATP-coupled ligase reaction, activating hydrogencarbonate by forming carboxy phosphate which reacts with ammonia to form carbamoyl phosphate. The polypeptide is Carbamoyl phosphate synthase large chain (Clostridium acetobutylicum (strain ATCC 824 / DSM 792 / JCM 1419 / IAM 19013 / LMG 5710 / NBRC 13948 / NRRL B-527 / VKM B-1787 / 2291 / W)).